The chain runs to 309 residues: Isoflavone reductase homolog IRL (309 aa).

NADP(+) is bound by residues 12–18, R37, and K46; that span reads GGTGYLG. The active-site Proton acceptor is K134. R138 serves as a coordination point for NADP(+).

The protein belongs to the NmrA-type oxidoreductase family. Isoflavone reductase subfamily. Monomer.

It localises to the cytoplasm. The protein operates within alkaloid biosynthesis. Functionally, reductase that may be involved in a late step of alkaloid biosynthesis. The sequence is that of Isoflavone reductase homolog IRL from Zea mays (Maize).